We begin with the raw amino-acid sequence, 344 residues long: tRNA N6-adenosine threonylcarbamoyltransferase (344 aa).

Positions 110 and 114 each coordinate Fe cation. Substrate is bound by residues 133–137 (VVSGA), D166, G179, and N278. Fe cation is bound at residue D303.

Belongs to the KAE1 / TsaD family. Requires Fe(2+) as cofactor.

The protein localises to the cytoplasm. The enzyme catalyses L-threonylcarbamoyladenylate + adenosine(37) in tRNA = N(6)-L-threonylcarbamoyladenosine(37) in tRNA + AMP + H(+). In terms of biological role, required for the formation of a threonylcarbamoyl group on adenosine at position 37 (t(6)A37) in tRNAs that read codons beginning with adenine. Is involved in the transfer of the threonylcarbamoyl moiety of threonylcarbamoyl-AMP (TC-AMP) to the N6 group of A37, together with TsaE and TsaB. TsaD likely plays a direct catalytic role in this reaction. In Chlamydia pneumoniae (Chlamydophila pneumoniae), this protein is tRNA N6-adenosine threonylcarbamoyltransferase.